A 258-amino-acid polypeptide reads, in one-letter code: Snake venom serine protease BPA (258 aa).

The first 18 residues, 1 to 18 (MVLIRVIANLLILQLSNA), serve as a signal peptide directing secretion. Positions 19 to 24 (QKSSEL) are excised as a propeptide. The 225-residue stretch at 25-249 (VIGGDECNIT…YLPWIQSIIA (225 aa)) folds into the Peptidase S1 domain. 6 cysteine pairs are disulfide-bonded: Cys31–Cys163, Cys50–Cys66, Cys98–Cys256, Cys142–Cys210, Cys174–Cys189, and Cys200–Cys225. 2 N-linked (GlcNAc...) asparagine glycosylation sites follow: Asn32 and Asn44. Catalysis depends on His65, which acts as the Charge relay system. Asn103 carries an N-linked (GlcNAc...) asparagine glycan. The Charge relay system role is filled by Asp110. A glycan (N-linked (GlcNAc...) asparagine) is linked at Asn121. Ser133 carries an O-linked (GalNAc...) serine glycan. N-linked (GlcNAc...) asparagine glycans are attached at residues Asn154 and Asn170. Ser204 serves as the catalytic Charge relay system. Asn211 and Asn251 each carry an N-linked (GlcNAc...) asparagine glycan. The O-linked (GalNAc...) threonine glycan is linked to Thr255.

This sequence belongs to the peptidase S1 family. Snake venom subfamily. Monomer. Post-translationally, N- and O-glycosylated. The glycosylation has a stabilizing effect on the protein. However, the removal of part of the carbohydrates enhances the proteolytic activity of the SVSP towards human and rat fibrinogen. In terms of tissue distribution, expressed by the venom gland.

It localises to the secreted. Inhibited by diisopropylfluorophosphate (DFP), but not by SBTI, Antithrombin III/heparin and BPTI, probably due to steric hindrance caused by its huge carbohydrate moietie. Functionally, snake venom serine protease that has a potent and selective fibrinogenolytic activity. Preferentially cleaves the alpha-chain (FGA) of human and rat fibrinogen at Arg-|-Gly bonds, and slowly digests the beta-chain (FGB). In vivo, completely avoids thrombus formation induced in rat, decreases the fibrinogen plasma level and prolonges the recalcification time. Possesses esterolytic and amidolytic activities. This is Snake venom serine protease BPA from Bothrops jararaca (Jararaca).